The sequence spans 334 residues: Transmembrane protein 41 homolog (334 aa).

Residue N43 is glycosylated (N-linked (GlcNAc...) asparagine). A disordered region spans residues 47 to 79 (KNKNNNIDNKKNSNNNNNNNNNNNNKNSISNNN). A glycan (N-linked (GlcNAc...) asparagine) is linked at N83. Helical transmembrane passes span 97–117 (LPLW…VFLF), 156–176 (FIVI…SIPG), 192–214 (VGFP…ISYY), 246–266 (IVFL…ASPL), 269–289 (VPIH…TFLA), and 305–325 (IFDL…ILPT).

Belongs to the TMEM41 family.

Its subcellular location is the membrane. This chain is Transmembrane protein 41 homolog, found in Dictyostelium discoideum (Social amoeba).